Reading from the N-terminus, the 351-residue chain is Alanine racemase (351 aa).

Lys-34 (proton acceptor; specific for D-alanine) is an active-site residue. Lys-34 is subject to N6-(pyridoxal phosphate)lysine. Arg-126 contributes to the substrate binding site. Tyr-248 acts as the Proton acceptor; specific for L-alanine in catalysis. Met-296 contributes to the substrate binding site.

This sequence belongs to the alanine racemase family. The cofactor is pyridoxal 5'-phosphate.

It catalyses the reaction L-alanine = D-alanine. It participates in amino-acid biosynthesis; D-alanine biosynthesis; D-alanine from L-alanine: step 1/1. In terms of biological role, catalyzes the interconversion of L-alanine and D-alanine. May also act on other amino acids. The protein is Alanine racemase (alr) of Deinococcus radiodurans (strain ATCC 13939 / DSM 20539 / JCM 16871 / CCUG 27074 / LMG 4051 / NBRC 15346 / NCIMB 9279 / VKM B-1422 / R1).